We begin with the raw amino-acid sequence, 261 residues long: uncharacterized protein (261 aa).

An N-terminal signal peptide occupies residues 1–20; the sequence is MKIQVMLIIIFVGIFTICLA. 2 N-linked (GlcNAc...) asparagine; by host glycosylation sites follow: Asn-22 and Asn-27.

Its subcellular location is the secreted. This is an uncharacterized protein from Acanthamoeba polyphaga (Amoeba).